The chain runs to 229 residues: Orotidine 5'-phosphate decarboxylase (229 aa).

Substrate-binding positions include Asp9, Lys31, 58-67, Thr121, Arg179, Gln188, Gly208, and Arg209; that span reads DLKLFDIPNT. The active-site Proton donor is Lys60.

The protein belongs to the OMP decarboxylase family. Type 1 subfamily. Homodimer.

It catalyses the reaction orotidine 5'-phosphate + H(+) = UMP + CO2. The protein operates within pyrimidine metabolism; UMP biosynthesis via de novo pathway; UMP from orotate: step 2/2. Functionally, catalyzes the decarboxylation of orotidine 5'-monophosphate (OMP) to uridine 5'-monophosphate (UMP). The sequence is that of Orotidine 5'-phosphate decarboxylase from Lawsonia intracellularis (strain PHE/MN1-00).